The primary structure comprises 128 residues: RxLR effector protein SFI2 (128 aa).

Positions 1–22 (MRSAFYIFLVVAVLARCSVVAA) are cleaved as a signal peptide. The RxLR-dEER motif lies at 52–71 (RLLRVAGREDDDATTDEEDR).

Belongs to the RxLR effector family.

It localises to the secreted. The protein resides in the host nucleus. Functionally, effector that suppresses flg22-induced post-translational MAP kinase activation both tomato and Arabidopsis. The perception of highly conserved pathogen- or microbe-associated molecular patterns (PAMPs/MAMPs), such as flg22, triggers converging signaling pathways recruiting MAP kinase cascades and inducing transcriptional re-programming, yielding a generic antimicrobial response. This chain is RxLR effector protein SFI2, found in Phytophthora infestans (strain T30-4) (Potato late blight agent).